A 126-amino-acid chain; its full sequence is Adenosine 5'-monophosphoramidase HINT1 (126 aa).

Residue Ala-2 is modified to N-acetylalanine. One can recognise an HIT domain in the interval 18–126 (IFGKIIRKEI…GGRQMNWPPG (109 aa)). An N6-acetyllysine mark is found at Lys-21 and Lys-30. 43–44 (DI) contacts AMP. A phosphoserine mark is found at Ser-45 and Ser-72. AMP-binding positions include Asn-99, 105–107 (GQS), and 112–114 (HLH). The short motif at 110–114 (HIHLH) is the Histidine triad motif element. The Tele-AMP-histidine intermediate role is filled by His-112.

This sequence belongs to the HINT family. As to quaternary structure, homodimer. Interacts with CDK7. Interacts with RUVBL1 and RUVBL2 and is associated with the LEF1/TCF1-CTNNB1 complex and with a KAT5 histone acetyltransferase complex. Identified in a complex with MITF and CTNNB1. Interacts with CDC34 and RBX1, and is part of a SCF (SKP2-CUL1-F-box protein) E3 ubiquitin-protein ligase complex. Interacts with SUMO1, SUMO2 and RGS17. Interacts with the Ten-1 ICD form of TENM1. Interacts with CALM1; interaction increases in the presence of calcium ions.

The protein resides in the cytoplasm. The protein localises to the nucleus. The enzyme catalyses adenosine 5'-phosphoramidate + H2O = AMP + NH4(+). Functionally, exhibits adenosine 5'-monophosphoramidase activity, hydrolyzing purine nucleotide phosphoramidates with a single phosphate group such as adenosine 5'monophosphoramidate (AMP-NH2) to yield AMP and NH2. Hydrolyzes adenosine 5'monophosphomorpholidate (AMP-morpholidate) and guanosine 5'monophosphomorpholidate (GMP-morpholidate). Hydrolyzes lysyl-AMP (AMP-N-epsilon-(N-alpha-acetyl lysine methyl ester)) generated by lysine tRNA ligase, as well as Met-AMP, His-AMP and Asp-AMP, lysyl-GMP (GMP-N-epsilon-(N-alpha-acetyl lysine methyl ester)) and AMP-N-alanine methyl ester. Can also convert adenosine 5'-O-phosphorothioate and guanosine 5'-O-phosphorothioate to the corresponding nucleoside 5'-O-phosphates with concomitant release of hydrogen sulfide. In addition, functions as a scaffolding protein that modulates transcriptional activation by the LEF1/TCF1-CTNNB1 complex and by the complex formed with MITF and CTNNB1. Modulates p53/TP53 levels and p53/TP53-mediated apoptosis. Modulates proteasomal degradation of target proteins by the SCF (SKP2-CUL1-F-box protein) E3 ubiquitin-protein ligase complex. Also exhibits SUMO-specific isopeptidase activity, deconjugating SUMO1 from RANGAP1 and RGS17. This chain is Adenosine 5'-monophosphoramidase HINT1 (Hint1), found in Rattus norvegicus (Rat).